Here is an 884-residue protein sequence, read N- to C-terminus: DNA replication licensing factor mcm2 (884 aa).

A compositionally biased stretch (polar residues) spans 1 to 16 (MADSSESFNIATSPRT). Disordered stretches follow at residues 1–61 (MADS…IGDA) and 120–151 (LYDS…EDEE). Residues 47 to 58 (PREEEEDGEELI) show a composition bias toward acidic residues. The C4-type zinc-finger motif lies at 314–340 (CNKCNFILGPFFQSQNQEVKPGSCPEC). In terms of domain architecture, MCM spans 458–664 (IGERIFASIA…VQDEMLARFV (207 aa)). ADP contacts are provided by Ser515 and Gln516. Positions 640–643 (SRFD) match the Arginine finger motif.

The protein belongs to the MCM family. In terms of assembly, component of the mcm2-7 complex (RLF-M). The complex forms a toroidal hexameric ring with the proposed subunit order mcm2-mcm6-mcm4-mcm7-mcm3-mcm5. Component of the replisome complex. Component of the CMG helicase complex, composed of the mcm2-7 complex, the GINS complex and cdc45. Post-translationally, may be in a phosphorylated state in the mitotic mcm complex. Phosphorylated in the interphase mcm complex. Phosphorylated by the cdc7-dbf4 and cdc7-dbf4b complexes.

Its subcellular location is the nucleus. The protein resides in the chromosome. The enzyme catalyses ATP + H2O = ADP + phosphate + H(+). In terms of biological role, acts as a component of the MCM2-7 complex (MCM complex) which is the replicative helicase essential for 'once per cell cycle' DNA replication initiation and elongation in eukaryotic cells. Core component of CDC45-MCM-GINS (CMG) helicase, the molecular machine that unwinds template DNA during replication, and around which the replisome is built. The active ATPase sites in the MCM2-7 ring are formed through the interaction surfaces of two neighboring subunits such that a critical structure of a conserved arginine finger motif is provided in trans relative to the ATP-binding site of the Walker A box of the adjacent subunit. The six ATPase active sites, however, are likely to contribute differentially to the complex helicase activity. Required for the entry in S phase and for cell division. This chain is DNA replication licensing factor mcm2, found in Xenopus tropicalis (Western clawed frog).